The sequence spans 510 residues: uncharacterized protein (510 aa).

The next 12 helical transmembrane spans lie at 17–37, 56–76, 111–131, 148–168, 180–200, 223–243, 261–281, 300–320, 355–375, 382–402, 434–454, and 472–492; these read LKLGIISLGLGGLYSIILVVL, LIIHVNLSILIWLLSITASVW, VLYIYPKLAFFATLLIAISPL, IVFILGLSLFGVTLLLYAINI, LVNVTVFSTIIMFILSFVCFG, LLFWSGGHLLQFIYTQILIFI, FYLFILYLNFVFSILILFGHI, YLGGIAPILCLVGMVVELVLM, IIKTILLCSITLFLLGGLIAI, LVIPAHYHGSIVGISIACMGY, AIYLLTFGQILHILGLAFSGI, and LLMGMMGIGGLIAIVGGLMFV.

The protein to A.aeolicus AQ_155.

It localises to the cell membrane. This is an uncharacterized protein from Rickettsia prowazekii (strain Madrid E).